A 566-amino-acid chain; its full sequence is Transcription factor atf1 (566 aa).

Residues 1-42 (MSPSPVNTSTEPASVAAVSNGNATASSTQVPENNQSDSFAPP) are compositionally biased toward polar residues. Disordered stretches follow at residues 1–83 (MSPS…FVGS), 96–117 (SFGSTASVGQGNPSLNRNPSLS), 315–345 (QQQTFPDSIRPSFTQNTNPQAVTGTMNPQAS), and 357–479 (SQQF…KSFL). Residues 43–53 (SNNSQQNQQSS) are compositionally biased toward low complexity. Polar residues-rich tracts occupy residues 65–76 (ANANPADQSDGV) and 97–106 (FGSTASVGQG). A compositionally biased stretch (low complexity) spans 107 to 117 (NPSLNRNPSLS). Composition is skewed to polar residues over residues 379–412 (TLRQTTDFSGQNAENGSTNLPQKTSNSDMPTANS) and 421–460 (TDYSTSQEPSSNANNQSSPTSSINGKASSESANGTSYSKG). Positions 466–479 (SKNETDEEKRKSFL) are enriched in basic and acidic residues. Positions 472–535 (EEKRKSFLER…VSLKTLLIAH (64 aa)) constitute a bZIP domain. Residues 474–503 (KRKSFLERNRQAALKCRQRKKQWLSNLQAK) form a basic motif region. Positions 514-528 (LSAQVSALREEIVSL) are leucine-zipper.

The protein belongs to the bZIP family. As to quaternary structure, heterodimer of pcr1/mts2 and atf1/mts1. Post-translationally, phosphorylated by sty1/spc1.

The protein resides in the nucleus. Functionally, transcription factor required for sexual development and entry into stationary phase. Binds and activates CRE sites (cAMP-response elements, also known as M26 meiotic recombination hotspots). The polypeptide is Transcription factor atf1 (atf1) (Schizosaccharomyces pombe (strain 972 / ATCC 24843) (Fission yeast)).